A 274-amino-acid polypeptide reads, in one-letter code: Tryptase beta-2 (274 aa).

A signal peptide spans 1 to 19 (MLKLLLLLALSPLASLVHA). Positions 20-29 (APCPVKQRVG) are cleaved as a propeptide — activation peptide. Positions 30-271 (IVGGREASES…YLDWIHRYVP (242 aa)) constitute a Peptidase S1 domain. C58 and C74 are disulfide-bonded. The active-site Charge relay system is the H73. Y96 is modified (phosphotyrosine). A glycan (N-linked (GlcNAc...) asparagine) is linked at N104. The active-site Charge relay system is the D120. An N-linked (GlcNAc...) asparagine glycan is attached at N131. 3 disulfides stabilise this stretch: C154–C229, C187–C210, and C219–C247. The Charge relay system role is filled by S223.

It belongs to the peptidase S1 family. Tryptase subfamily. As to quaternary structure, homotetramer. The active tetramer is converted to inactive monomers at neutral and acidic pH in the absence of heparin. Low concentrations of inactive monomers become active monomers at pH 6.0 in the presence of heparin. When the concentration of active monomers is higher, they convert to active monomers and then to active tetramers. These monomers are active and functionally distinct from the tetrameric enzyme. In contrast to the hidden active sites in the tetrameric form, the active site of the monomeric form is accessible for macromolecular proteins and inhibitors, e.g. fibrinogen which is a substrate for the monomeric but not for the tetrameric form. The monomeric form forms a complex with SERPINB6.

Its subcellular location is the secreted. It catalyses the reaction Preferential cleavage: Arg-|-Xaa, Lys-|-Xaa, but with more restricted specificity than trypsin.. Tryptase is the major neutral protease present in mast cells and is secreted upon the coupled activation-degranulation response of this cell type. Plays a role in innate immunity. The polypeptide is Tryptase beta-2 (Tpsb2) (Rattus norvegicus (Rat)).